A 1113-amino-acid chain; its full sequence is Lon protease homolog, mitochondrial (1113 aa).

A mitochondrion-targeting transit peptide spans 1 to 61 (MLRGQTLPWR…RAFSSSSIRR (61 aa)). The tract at residues 42 to 196 (SRLHRSLPTS…SGEKALQKPS (155 aa)) is disordered. 3 stretches are compositionally biased toward basic and acidic residues: residues 64–99 (KPPPGDEKDDPAQKEQKDANEEKDVERAPDARRKAA), 124–143 (KAGADKEQRGLEEDSKKDGN), and 178–192 (DGGKKGKKGSGEKAL). The Lon N-terminal domain maps to 204–456 (VMAIPIAKRP…KALVVLKKEL (253 aa)). An ATP-binding site is contributed by 609–616 (GPPGVGKT). Basic and acidic residues predominate over residues 828–858 (LTDEGKAVQEESQKETESPDSKSPVDPEKST). The segment at 828–864 (LTDEGKAVQEESQKETESPDSKSPVDPEKSTTETPRV) is disordered. In terms of domain architecture, Lon proteolytic spans 898 to 1084 (TFPPGVTMGL…SEVFDLLFTD (187 aa)). Residues serine 990 and lysine 1033 contribute to the active site.

Belongs to the peptidase S16 family. In terms of assembly, homohexamer or homoheptamer. Organized in a ring with a central cavity.

The protein localises to the mitochondrion matrix. The catalysed reaction is Hydrolysis of proteins in presence of ATP.. ATP-dependent serine protease that mediates the selective degradation of misfolded, unassembled or oxidatively damaged polypeptides as well as certain short-lived regulatory proteins in the mitochondrial matrix. May also have a chaperone function in the assembly of inner membrane protein complexes. Participates in the regulation of mitochondrial gene expression and in the maintenance of the integrity of the mitochondrial genome. Binds to mitochondrial DNA in a site-specific manner. The chain is Lon protease homolog, mitochondrial (pim1) from Aspergillus niger (strain ATCC MYA-4892 / CBS 513.88 / FGSC A1513).